A 188-amino-acid chain; its full sequence is Probable chorismate pyruvate-lyase (188 aa).

Residues arginine 90, leucine 128, and glutamate 175 each contribute to the substrate site.

This sequence belongs to the UbiC family.

The protein resides in the cytoplasm. The catalysed reaction is chorismate = 4-hydroxybenzoate + pyruvate. It participates in cofactor biosynthesis; ubiquinone biosynthesis. In terms of biological role, removes the pyruvyl group from chorismate, with concomitant aromatization of the ring, to provide 4-hydroxybenzoate (4HB) for the ubiquinone pathway. The protein is Probable chorismate pyruvate-lyase of Marinobacter nauticus (strain ATCC 700491 / DSM 11845 / VT8) (Marinobacter aquaeolei).